The sequence spans 344 residues: Tryptophan--tRNA ligase (344 aa).

Residues 20–22 (QPS) and 28–29 (GN) each bind ATP. A 'HIGH' region motif is present at residues 21–29 (PSGALHLGN). L-tryptophan is bound at residue aspartate 144. Residues 156–158 (GED), valine 197, and 206–210 (KMSKS) contribute to the ATP site. Positions 206–210 (KMSKS) match the 'KMSKS' region motif.

Belongs to the class-I aminoacyl-tRNA synthetase family. Homodimer.

The protein resides in the cytoplasm. The enzyme catalyses tRNA(Trp) + L-tryptophan + ATP = L-tryptophyl-tRNA(Trp) + AMP + diphosphate + H(+). Catalyzes the attachment of tryptophan to tRNA(Trp). In Caulobacter vibrioides (strain ATCC 19089 / CIP 103742 / CB 15) (Caulobacter crescentus), this protein is Tryptophan--tRNA ligase.